The following is a 316-amino-acid chain: tRNA-cytidine(32) 2-sulfurtransferase (316 aa).

Positions Ser45–Ser50 match the PP-loop motif motif. [4Fe-4S] cluster is bound by residues Cys120, Cys123, and Cys211.

Belongs to the TtcA family. In terms of assembly, homodimer. The cofactor is Mg(2+). [4Fe-4S] cluster serves as cofactor.

It is found in the cytoplasm. It carries out the reaction cytidine(32) in tRNA + S-sulfanyl-L-cysteinyl-[cysteine desulfurase] + AH2 + ATP = 2-thiocytidine(32) in tRNA + L-cysteinyl-[cysteine desulfurase] + A + AMP + diphosphate + H(+). It functions in the pathway tRNA modification. In terms of biological role, catalyzes the ATP-dependent 2-thiolation of cytidine in position 32 of tRNA, to form 2-thiocytidine (s(2)C32). The sulfur atoms are provided by the cysteine/cysteine desulfurase (IscS) system. This chain is tRNA-cytidine(32) 2-sulfurtransferase, found in Shewanella sediminis (strain HAW-EB3).